We begin with the raw amino-acid sequence, 166 residues long: MAAYPESCVDTTVLDFVADLSLASPRRPLLCDFAPGVSLGDPALALREGRPRRMARFEEGDPEEEECEVDQGDGEEEEEEERGRGVSLLGRPKRKRVITYAQRQAANIRERKRMFNLNEAFDQLRRKVPTFAYEKRLSRIETLRLAIVYISFMTELLESCEKKESG.

Residues 57-88 (FEEGDPEEEECEVDQGDGEEEEEEERGRGVSL) form a disordered region. Residues 60 to 80 (GDPEEEECEVDQGDGEEEEEE) show a composition bias toward acidic residues. In terms of domain architecture, bHLH spans 101–153 (AQRQAANIRERKRMFNLNEAFDQLRRKVPTFAYEKRLSRIETLRLAIVYISFM).

As to quaternary structure, heterodimer with TCF3/E12. Interacts with the bHLH domain of TCF3/E12.

Its subcellular location is the nucleus. Its function is as follows. Transcription factor that binds to the E-box and functions as inhibitor of transcription. DNA binding requires dimerization with an E protein. Inhibits transcription activation by ASCL1/MASH1 by sequestering E proteins. The chain is Fer3-like protein (FERD3L) from Homo sapiens (Human).